We begin with the raw amino-acid sequence, 244 residues long: Large ribosomal subunit protein uL3 (244 aa).

Residues 215–244 are disordered; sequence KKPPRERRGFAGSSTVDPLKASKRAVAKKK. Basic residues predominate over residues 235–244; sequence ASKRAVAKKK.

Belongs to the universal ribosomal protein uL3 family. In terms of assembly, part of the 50S ribosomal subunit. Forms a cluster with proteins L14 and L19.

In terms of biological role, one of the primary rRNA binding proteins, it binds directly near the 3'-end of the 23S rRNA, where it nucleates assembly of the 50S subunit. The sequence is that of Large ribosomal subunit protein uL3 from Koribacter versatilis (strain Ellin345).